The chain runs to 127 residues: Cytochrome c2 (127 aa).

The signal sequence occupies residues 1–20 (MRKLVFGLFVLAASVAPAAA). At Gln-21 the chain carries Pyrrolidone carboxylic acid. Residues Cys-33, Cys-36, His-37, and Met-99 each contribute to the heme c site.

The protein belongs to the cytochrome c family. Post-translationally, binds 1 heme c group covalently per subunit.

Cytochrome c2 is found mainly in purple, non-sulfur, photosynthetic bacteria where it functions as the electron donor to the oxidized bacteriochlorophyll in the photophosphorylation pathway. However, it may also have a role in the respiratory chain and is found in some non-photosynthetic bacteria. The chain is Cytochrome c2 (cycA) from Blastochloris viridis (Rhodopseudomonas viridis).